Reading from the N-terminus, the 173-residue chain is Small ribosomal subunit protein uS9 (173 aa).

Residues 20-53 (SYTTESEVPVEGEYTSESVASRFGEPQPAAGLGR) are disordered.

Belongs to the universal ribosomal protein uS9 family.

The sequence is that of Small ribosomal subunit protein uS9 from Streptomyces avermitilis (strain ATCC 31267 / DSM 46492 / JCM 5070 / NBRC 14893 / NCIMB 12804 / NRRL 8165 / MA-4680).